The chain runs to 413 residues: Protein trichome birefringence-like 9 (413 aa).

The helical; Signal-anchor for type II membrane protein transmembrane segment at 22 to 42 (LFVSLFLLSLLIFSTVVVDVM) threads the bilayer. The GDS motif signature appears at 141–143 (GDS). Residues 384 to 398 (DCSHWCLPGVPDTWN) carry the DCXHWCLPGXXDXWN motif motif.

This sequence belongs to the PC-esterase family. TBL subfamily.

It localises to the membrane. In terms of biological role, may act as a bridging protein that binds pectin and other cell wall polysaccharides. Probably involved in maintaining esterification of pectins. May be involved in the specific O-acetylation of cell wall polymers. The protein is Protein trichome birefringence-like 9 (TBL9) of Arabidopsis thaliana (Mouse-ear cress).